The sequence spans 460 residues: Ufm1-specific protease 2 (460 aa).

Residues C293, D417, and H419 contribute to the active site.

The protein belongs to the peptidase C78 family.

Its subcellular location is the endoplasmic reticulum. It localises to the cytoplasm. The protein resides in the nucleus. Thiol-dependent isopeptidase that specifically cleaves UFM1, a ubiquitin-like modifier protein, from conjugated proteins. While it is also able to mediate the processing of UFM1 precursors, a prerequisite for conjugation reactions, UFSP2 mainly acts as a protein deUFMylase that mediates deconjugation of UFM1 from target proteins. This Gallus gallus (Chicken) protein is Ufm1-specific protease 2.